A 252-amino-acid chain; its full sequence is Protein TRANSPARENT TESTA 16 (252 aa).

The MADS-box domain occupies 1 to 61; that stretch reads MGRGKIEIKK…GKLSEFCSEQ (61 aa). The K-box domain occupies 86–176; that stretch reads QEQLHHEMEL…YRWLHEHRAA (91 aa). Residues 121–174 are a coiled coil; the sequence is NELDGLERQLEHSVLKVRERKNELMQQQLENLSRKRRMLEEDNNNMYRWLHEHR.

Interacts with AP1/AGL7, SEP1/AGL2, SEP2/AGL4, SEP3/AGL9 and AGL3/SEP4. In terms of tissue distribution, expressed in buds, flowers and immature seeds, but not in roots, stems, leaves, seedlings or siliques valves. Expression in seed coat is confined to the endothelium layer.

It localises to the nucleus. Its function is as follows. Transcription factor involved in the developmental regulation of the endothelium and in the accumulation of proanthocyanidins (PAs) or condensed tannins which give the seed its brown pigmentation after oxidation. Necessary for the normal activation of the BANYULS promoter in the endothelium body. Is required, together with AGL11/STK for the maternal control of endothelium formation, which is essential for female gametophyte development and fertilization, and seed formation. Interacts genetically with AGL1/SHP1 and AGL5/SHP2 in a partially antagonistic manner and represses AGL1/SHP1, AGL5/SHP2, and AGL8/FUL during flower development. Is essential for the coordination of cell divisions in ovule, seed coat development and endosperm formation. Mediates the crosstalk between endothelium and nucellus to ensure proper seed formation. Functions redundantly with AGL63/GOA to repress nucellus growth and promote its degeneration. Represses the negative regulator of autophagy and programmed cell death HVA22D in the proximal nucellus. Binds specifically to the CArG box DNA sequence 5'-CC (A/T)6 GG-3'. This Arabidopsis thaliana (Mouse-ear cress) protein is Protein TRANSPARENT TESTA 16 (TT16).